The chain runs to 491 residues: Pre-glycoprotein polyprotein GP complex (491 aa).

The N-myristoyl glycine; by host moiety is linked to residue G2. Topologically, residues 2–17 (GQIVTFFQEVPHVIEE) are extracellular. The chain crosses the membrane as a helical span at residues 18 to 33 (VMNIVLIALSVLAVLK). At 34 to 58 (GLYNFATCGLVGLVTFLLLCGRSCT) the chain is on the cytoplasmic side. A Zn(2+)-binding site is contributed by C57. At 59–432 (TSLYKGVYEL…QGKTPLGLVD (374 aa)) the chain is on the extracellular side. N-linked (GlcNAc...) asparagine; by host glycosylation is found at N79, N89, N99, N109, N119, and N167. Cystine bridges form between C86/C231, C118/C155, C180/C212, C279/C292, C301/C310, and C364/C385. N-linked (GlcNAc...) asparagine; by host glycosylation is present at N224. Residues N365, N373, N390, and N395 are each glycosylated (N-linked (GlcNAc...) asparagine; by host). The chain crosses the membrane as a helical span at residues 433–453 (LFVFSTSFYLISIFLHLVKIP). Over 454–491 (THRHIVGKSCPKPHRLNHMGICSCGLYKQPGVPVKWKR) the chain is Cytoplasmic. 6 residues coordinate Zn(2+): H455, H457, C463, H467, C475, and C477.

The protein belongs to the arenaviridae GPC protein family. As to quaternary structure, interacts with glycoprotein G2. Part of the GP complex (GP-C) together with glycoprotein G1 and glycoprotein G2. The GP-complex interacts with protein Z, which interacts with ribonucleocapsid; these interactions may induce virion budding. In terms of assembly, homotrimer; disulfide-linked. In pre-fusion state, G1 homotrimers bind G2 homotrimers via ionic interactions. Part of the GP complex (GP-C) together with glycoprotein G2 and the stable signal peptide. Interacts with the primary host receptor DAG1 on the cell surface; this interaction occurs at pH 8.0 but not at pH 6.0 and below. Upon virus internalization and at endosomal pH, interacts with the host lysosomal protein LAMP1; this interaction mediates G1 dissociation from GP-C and membrane fusion. The GP-complex interacts with protein Z, which interacts with ribonucleocapsid; these interactions may induce virion budding. Homotrimer. Interacts with the stable signal peptide. In pre-fusion state, G2 homotrimers bind G1 homotrimers via ionic interactions. Part of the GP complex (GP-C) together with glycoprotein G1 and the stable signal peptide. Acidification in the endosome triggers rearrangements, which ultimately leads to a 6 helix bundle formed by the two heptad repeat domains (HR1 and HR2) in post-fusion state. The GP-complex interacts with protein Z, which interacts with ribonucleocapsid; these interactions may induce virion budding. In terms of processing, specific enzymatic cleavages in vivo yield mature proteins. GP-C polyprotein is cleaved in the endoplasmic reticulum by the host protease MBTPS1. Only cleaved glycoprotein is incorporated into virions. Post-translationally, the SSP remains stably associated with the GP complex following cleavage by signal peptidase and plays crucial roles in the trafficking of GP through the secretory pathway. Myristoylation is necessary for GP2-mediated fusion activity.

It localises to the virion membrane. Its subcellular location is the host endoplasmic reticulum membrane. The protein resides in the host Golgi apparatus membrane. The protein localises to the host cell membrane. Its function is as follows. Functions as a cleaved signal peptide that is retained as the third component of the GP complex (GP-C). Helps to stabilize the spike complex in its native conformation. The SSP is required for efficient glycoprotein expression, post-translational maturation cleavage of G1 and G2, glycoprotein transport to the cell surface plasma membrane, formation of infectious virus particles, and acid pH-dependent glycoprotein-mediated cell fusion. In terms of biological role, forms the virion spikes together with glycoprotein G2. The glycoprotein spike trimers are connected to the underlying matrix. Interacts with the host receptor. Mediates virus attachment to the host primary receptor alpha-dystroglycan DAG1 (alpha-DG) at the cell surface. This attachment induces virion internalization apparently through macropinocytosis. Following endocytosis, there is a pH-dependent switch from binding DAG1 to the host lysosomal receptor LAMP1. This latter binding triggers the dissociation of GP1, exposing the fusion subunit, GP2, such that fusion can occur. Down-modulates host DAG1. Functionally, forms the virion spikes together with glycoprotein G1. The glycoprotein spike trimers are connected to the underlying matrix. Class I viral fusion protein that directs fusion of viral and host endosomal membranes, leading to delivery of the nucleocapsid into the cytoplasm. Membrane fusion is mediated by irreversible conformational changes induced by acidification. The polypeptide is Pre-glycoprotein polyprotein GP complex (Homo sapiens (Human)).